Here is a 49-residue protein sequence, read N- to C-terminus: Large ribosomal subunit protein bL33B (49 aa).

It belongs to the bacterial ribosomal protein bL33 family.

The protein is Large ribosomal subunit protein bL33B of Geobacillus kaustophilus (strain HTA426).